The primary structure comprises 66 residues: Large ribosomal subunit protein uL29 (66 aa).

Belongs to the universal ribosomal protein uL29 family.

This Lysinibacillus sphaericus (strain C3-41) protein is Large ribosomal subunit protein uL29.